A 588-amino-acid chain; its full sequence is Aspartate--tRNA ligase (588 aa).

Glu-174 is a binding site for L-aspartate. The interval 198-201 (QLFK) is aspartate. Arg-220 is an L-aspartate binding site. ATP is bound by residues 220–222 (RDE) and Gln-229. His-448 is a binding site for L-aspartate. Glu-482 contributes to the ATP binding site. An L-aspartate-binding site is contributed by Arg-489. 534 to 537 (GIDR) is an ATP binding site.

This sequence belongs to the class-II aminoacyl-tRNA synthetase family. Type 1 subfamily. As to quaternary structure, homodimer.

The protein resides in the cytoplasm. It carries out the reaction tRNA(Asp) + L-aspartate + ATP = L-aspartyl-tRNA(Asp) + AMP + diphosphate. Its function is as follows. Catalyzes the attachment of L-aspartate to tRNA(Asp) in a two-step reaction: L-aspartate is first activated by ATP to form Asp-AMP and then transferred to the acceptor end of tRNA(Asp). The sequence is that of Aspartate--tRNA ligase from Xanthomonas oryzae pv. oryzae (strain PXO99A).